Consider the following 72-residue polypeptide: Dermaseptin-A4 (72 aa).

The signal sequence occupies residues 1–22 (MAFLKKSLFLVLFLGMVSLSIC). Residues 23–41 (EEEKREEENEQEDDEQSEE) constitute a propeptide that is removed on maturation. A disordered region spans residues 24-43 (EEKREEENEQEDDEQSEEKR). Positions 30–39 (ENEQEDDEQS) are enriched in acidic residues. At alanine 69 the chain carries Alanine amide. Residues 71 to 72 (EQ) constitute a propeptide that is removed on maturation.

It belongs to the frog skin active peptide (FSAP) family. Dermaseptin subfamily. As to expression, expressed by the skin glands.

The protein localises to the secreted. Functionally, possesses a potent antimicrobial activity against Gram-positive and Gram-negative bacteria. Probably acts by disturbing membrane functions with its amphipathic structure. In Agalychnis annae (Blue-sided leaf frog), this protein is Dermaseptin-A4.